The chain runs to 455 residues: ATP-dependent protease ATPase subunit HslU (455 aa).

ATP-binding positions include Ile-19, 61–66, Asp-268, Glu-333, and Arg-405; that span reads GVGKTE.

The protein belongs to the ClpX chaperone family. HslU subfamily. In terms of assembly, a double ring-shaped homohexamer of HslV is capped on each side by a ring-shaped HslU homohexamer. The assembly of the HslU/HslV complex is dependent on binding of ATP.

The protein localises to the cytoplasm. In terms of biological role, ATPase subunit of a proteasome-like degradation complex; this subunit has chaperone activity. The binding of ATP and its subsequent hydrolysis by HslU are essential for unfolding of protein substrates subsequently hydrolyzed by HslV. HslU recognizes the N-terminal part of its protein substrates and unfolds these before they are guided to HslV for hydrolysis. In Francisella philomiragia subsp. philomiragia (strain ATCC 25017 / CCUG 19701 / FSC 153 / O#319-036), this protein is ATP-dependent protease ATPase subunit HslU.